A 779-amino-acid chain; its full sequence is Translation initiation factor IF-2 (779 aa).

The tract at residues 44–193 (RQLDNAVDGT…TPPKPKELPE (150 aa)) is disordered. The span at 53–65 (TNKKAEAPKKETT) shows a compositional bias: basic and acidic residues. Positions 66 to 81 (SNENGNSKGPNKPNMT) are enriched in polar residues. 2 stretches are compositionally biased toward low complexity: residues 82–93 (NSNEKSNKPNKP) and 117–167 (ANTS…NNKG). Residues 280–449 (ERPPVVTIMG…LLVSEVEELK (170 aa)) enclose the tr-type G domain. The segment at 289 to 296 (GHVDHGKT) is G1. 289–296 (GHVDHGKT) provides a ligand contact to GTP. The segment at 314–318 (GITQH) is G2. The segment at 335–338 (DTPG) is G3. Residues 335–339 (DTPGH) and 389–392 (NKID) contribute to the GTP site. Residues 389–392 (NKID) form a G4 region. Residues 425–427 (SAK) form a G5 region.

It belongs to the TRAFAC class translation factor GTPase superfamily. Classic translation factor GTPase family. IF-2 subfamily.

It localises to the cytoplasm. In terms of biological role, one of the essential components for the initiation of protein synthesis. Protects formylmethionyl-tRNA from spontaneous hydrolysis and promotes its binding to the 30S ribosomal subunits. Also involved in the hydrolysis of GTP during the formation of the 70S ribosomal complex. This is Translation initiation factor IF-2 from Listeria monocytogenes serovar 1/2a (strain ATCC BAA-679 / EGD-e).